The primary structure comprises 350 residues: Small ribosomal subunit biogenesis GTPase RsgA (350 aa).

Residues 1–17 are compositionally biased toward polar residues; it reads MSKNKLSKGQQRRVNAN. Positions 1–33 are disordered; it reads MSKNKLSKGQQRRVNANHQRRLKTSKEKPDYDD. Residues 104–273 form the CP-type G domain; it reads TSVLTRPDFY…VIDSPGVREF (170 aa). Residues 160 to 163 and 214 to 222 each bind GTP; these read NKID and GQSGVGKSS. 4 residues coordinate Zn(2+): Cys-297, Cys-302, His-304, and Cys-310.

This sequence belongs to the TRAFAC class YlqF/YawG GTPase family. RsgA subfamily. Monomer. Associates with 30S ribosomal subunit, binds 16S rRNA. Requires Zn(2+) as cofactor.

It is found in the cytoplasm. Its function is as follows. One of several proteins that assist in the late maturation steps of the functional core of the 30S ribosomal subunit. Helps release RbfA from mature subunits. May play a role in the assembly of ribosomal proteins into the subunit. Circularly permuted GTPase that catalyzes slow GTP hydrolysis, GTPase activity is stimulated by the 30S ribosomal subunit. The polypeptide is Small ribosomal subunit biogenesis GTPase RsgA (Escherichia coli O6:H1 (strain CFT073 / ATCC 700928 / UPEC)).